The following is a 505-amino-acid chain: Probable alpha-L-arabinofuranosidase C (505 aa).

Asn-152, Asn-269, and Asn-438 each carry an N-linked (GlcNAc...) asparagine glycan.

The protein belongs to the glycosyl hydrolase 51 family.

Its subcellular location is the secreted. It carries out the reaction Hydrolysis of terminal non-reducing alpha-L-arabinofuranoside residues in alpha-L-arabinosides.. It participates in glycan metabolism; L-arabinan degradation. In terms of biological role, alpha-L-arabinofuranosidase involved in the degradation of arabinoxylan, a major component of plant hemicellulose. Acts only on small linear 1,5-alpha-linked L-arabinofuranosyl oligosaccharides. The sequence is that of Probable alpha-L-arabinofuranosidase C (abfC) from Aspergillus clavatus (strain ATCC 1007 / CBS 513.65 / DSM 816 / NCTC 3887 / NRRL 1 / QM 1276 / 107).